Here is an 81-residue protein sequence, read N- to C-terminus: Photosystem I iron-sulfur center (81 aa).

4Fe-4S ferredoxin-type domains lie at 2-31 (SHSV…MIPW) and 39-68 (IASA…VRVY). [4Fe-4S] cluster is bound by residues Cys11, Cys14, Cys17, Cys21, Cys48, Cys51, Cys54, and Cys58.

As to quaternary structure, the eukaryotic PSI reaction center is composed of at least 11 subunits. It depends on [4Fe-4S] cluster as a cofactor.

The protein resides in the plastid thylakoid membrane. It carries out the reaction reduced [plastocyanin] + hnu + oxidized [2Fe-2S]-[ferredoxin] = oxidized [plastocyanin] + reduced [2Fe-2S]-[ferredoxin]. Apoprotein for the two 4Fe-4S centers FA and FB of photosystem I (PSI); essential for photochemical activity. FB is the terminal electron acceptor of PSI, donating electrons to ferredoxin. The C-terminus interacts with PsaA/B/D and helps assemble the protein into the PSI complex. Required for binding of PsaD and PsaE to PSI. PSI is a plastocyanin-ferredoxin oxidoreductase, converting photonic excitation into a charge separation, which transfers an electron from the donor P700 chlorophyll pair to the spectroscopically characterized acceptors A0, A1, FX, FA and FB in turn. The polypeptide is Photosystem I iron-sulfur center (Cuscuta reflexa (Southern Asian dodder)).